Reading from the N-terminus, the 260-residue chain is Histidine-binding periplasmic protein (260 aa).

Residues 1 to 22 form the signal peptide; sequence MKKLVLSLSLVLAFSSATAAFA. Residues C60 and C67 are joined by a disulfide bond. 6 residues coordinate L-histidine: S91, S92, S94, R99, T143, and D183.

This sequence belongs to the bacterial solute-binding protein 3 family. As to quaternary structure, the complex is composed of two ATP-binding proteins (HisP), two transmembrane proteins (HisM and HisQ) and a solute-binding protein (HisJ).

The protein resides in the periplasm. Part of the ABC transporter complex HisPMQJ involved in histidine transport. Binds histidine. Interacts with HisQMP and stimulates ATPase activity of HisP, which results in histidine translocation. In Escherichia coli O157:H7, this protein is Histidine-binding periplasmic protein (hisJ).